The primary structure comprises 247 residues: Uridylate kinase (247 aa).

18–21 (KLSG) lines the ATP pocket. Residue Gly-60 participates in UMP binding. The ATP site is built by Gly-61 and Arg-65. UMP contacts are provided by residues Asp-80 and 141–148 (TGNPFFTT). ATP-binding residues include Thr-168, Tyr-174, and Asp-177.

It belongs to the UMP kinase family. As to quaternary structure, homohexamer.

The protein resides in the cytoplasm. The enzyme catalyses UMP + ATP = UDP + ADP. Its pathway is pyrimidine metabolism; CTP biosynthesis via de novo pathway; UDP from UMP (UMPK route): step 1/1. With respect to regulation, inhibited by UTP. In terms of biological role, catalyzes the reversible phosphorylation of UMP to UDP. In Pseudomonas savastanoi pv. phaseolicola (strain 1448A / Race 6) (Pseudomonas syringae pv. phaseolicola (strain 1448A / Race 6)), this protein is Uridylate kinase.